The following is a 258-amino-acid chain: Acetylglutamate kinase (258 aa).

Substrate is bound by residues 44 to 45 (GG), Arg-66, and Asn-158. ATP contacts are provided by residues 181-186 (DVSGIL) and 209-211 (IIT).

This sequence belongs to the acetylglutamate kinase family. ArgB subfamily. Homodimer.

It localises to the cytoplasm. The enzyme catalyses N-acetyl-L-glutamate + ATP = N-acetyl-L-glutamyl 5-phosphate + ADP. The protein operates within amino-acid biosynthesis; L-arginine biosynthesis; N(2)-acetyl-L-ornithine from L-glutamate: step 2/4. Catalyzes the ATP-dependent phosphorylation of N-acetyl-L-glutamate. In Shigella flexneri, this protein is Acetylglutamate kinase.